The sequence spans 274 residues: Shikimate dehydrogenase (NADP(+)) (274 aa).

Shikimate contacts are provided by residues 14-16 and Thr-60; that span reads SKS. Lys-64 serves as the catalytic Proton acceptor. Position 76 (Glu-76) interacts with NADP(+). Residues Asn-85 and Asp-101 each coordinate shikimate. NADP(+)-binding positions include 126-130, 150-155, and Met-214; these read GAGGA and NRTAEK. Tyr-216 contacts shikimate. Residue Gly-238 coordinates NADP(+).

It belongs to the shikimate dehydrogenase family. Homodimer.

The catalysed reaction is shikimate + NADP(+) = 3-dehydroshikimate + NADPH + H(+). Its pathway is metabolic intermediate biosynthesis; chorismate biosynthesis; chorismate from D-erythrose 4-phosphate and phosphoenolpyruvate: step 4/7. Involved in the biosynthesis of the chorismate, which leads to the biosynthesis of aromatic amino acids. Catalyzes the reversible NADPH linked reduction of 3-dehydroshikimate (DHSA) to yield shikimate (SA). In Pseudomonas paraeruginosa (strain DSM 24068 / PA7) (Pseudomonas aeruginosa (strain PA7)), this protein is Shikimate dehydrogenase (NADP(+)).